Reading from the N-terminus, the 198-residue chain is 7-methyl-GTP pyrophosphatase (198 aa).

D75 acts as the Proton acceptor in catalysis.

It belongs to the Maf family. YceF subfamily. Requires a divalent metal cation as cofactor.

The protein localises to the cytoplasm. It carries out the reaction N(7)-methyl-GTP + H2O = N(7)-methyl-GMP + diphosphate + H(+). Its function is as follows. Nucleoside triphosphate pyrophosphatase that hydrolyzes 7-methyl-GTP (m(7)GTP). May have a dual role in cell division arrest and in preventing the incorporation of modified nucleotides into cellular nucleic acids. This chain is 7-methyl-GTP pyrophosphatase, found in Bartonella henselae (strain ATCC 49882 / DSM 28221 / CCUG 30454 / Houston 1) (Rochalimaea henselae).